The primary structure comprises 876 residues: Valine--tRNA ligase (876 aa).

Residues 43–53 carry the 'HIGH' region motif; it reads PNVTGVLHMGH. The 'KMSKS' region motif lies at 532-536; the sequence is KMSKS. Lys535 contributes to the ATP binding site. Coiled coils occupy residues 805–826 and 853–875; these read GNMIDVDAEIARMEAELKHKEG and RKKQADAESIIQSLKESIASLKN.

Belongs to the class-I aminoacyl-tRNA synthetase family. ValS type 1 subfamily. Monomer.

It is found in the cytoplasm. It carries out the reaction tRNA(Val) + L-valine + ATP = L-valyl-tRNA(Val) + AMP + diphosphate. Its function is as follows. Catalyzes the attachment of valine to tRNA(Val). As ValRS can inadvertently accommodate and process structurally similar amino acids such as threonine, to avoid such errors, it has a 'posttransfer' editing activity that hydrolyzes mischarged Thr-tRNA(Val) in a tRNA-dependent manner. The polypeptide is Valine--tRNA ligase (Bacteroides fragilis (strain ATCC 25285 / DSM 2151 / CCUG 4856 / JCM 11019 / LMG 10263 / NCTC 9343 / Onslow / VPI 2553 / EN-2)).